The following is a 34-amino-acid chain: Dermaseptin-H5 (34 aa).

As to expression, expressed by the skin glands.

It localises to the secreted. In terms of biological role, has antimicrobial activity. The sequence is that of Dermaseptin-H5 from Pithecopus hypochondrialis (Orange-legged leaf frog).